The primary structure comprises 100 residues: Urease subunit gamma (100 aa).

It belongs to the urease gamma subunit family. In terms of assembly, heterotrimer of UreA (gamma), UreB (beta) and UreC (alpha) subunits. Three heterotrimers associate to form the active enzyme.

It is found in the cytoplasm. The enzyme catalyses urea + 2 H2O + H(+) = hydrogencarbonate + 2 NH4(+). Its pathway is nitrogen metabolism; urea degradation; CO(2) and NH(3) from urea (urease route): step 1/1. This Corynebacterium urealyticum (strain ATCC 43042 / DSM 7109) protein is Urease subunit gamma.